Consider the following 152-residue polypeptide: Protein-export protein SecB (152 aa).

This sequence belongs to the SecB family. In terms of assembly, homotetramer, a dimer of dimers. One homotetramer interacts with 1 SecA dimer.

It localises to the cytoplasm. One of the proteins required for the normal export of preproteins out of the cell cytoplasm. It is a molecular chaperone that binds to a subset of precursor proteins, maintaining them in a translocation-competent state. It also specifically binds to its receptor SecA. The sequence is that of Protein-export protein SecB from Rickettsia bellii (strain RML369-C).